The chain runs to 446 residues: Tubulin alpha-2 chain (446 aa).

An MREC motif motif is present at residues 1 to 4 (MREC). The GTP site is built by Gln-11, Glu-68, Ser-137, Gly-141, Thr-142, Ser-176, Asn-203, and Asn-225. Glu-68 serves as a coordination point for Mg(2+). Residue Glu-251 is part of the active site.

The protein belongs to the tubulin family. Dimer of alpha and beta chains. A typical microtubule is a hollow water-filled tube with an outer diameter of 25 nm and an inner diameter of 15 nM. Alpha-beta heterodimers associate head-to-tail to form protofilaments running lengthwise along the microtubule wall with the beta-tubulin subunit facing the microtubule plus end conferring a structural polarity. Microtubules usually have 13 protofilaments but different protofilament numbers can be found in some organisms and specialized cells. Mg(2+) is required as a cofactor. Some glutamate residues at the C-terminus are polyglycylated, resulting in polyglycine chains on the gamma-carboxyl group. Glycylation is mainly limited to tubulin incorporated into axonemes (cilia and flagella) whereas glutamylation is prevalent in neuronal cells, centrioles, axonemes, and the mitotic spindle. Both modifications can coexist on the same protein on adjacent residues, and lowering polyglycylation levels increases polyglutamylation, and reciprocally. The precise function of polyglycylation is still unclear. In terms of processing, some glutamate residues at the C-terminus are polyglutamylated, resulting in polyglutamate chains on the gamma-carboxyl group. Polyglutamylation plays a key role in microtubule severing by spastin (SPAST). SPAST preferentially recognizes and acts on microtubules decorated with short polyglutamate tails: severing activity by SPAST increases as the number of glutamates per tubulin rises from one to eight, but decreases beyond this glutamylation threshold. In terms of tissue distribution, testis specific.

It localises to the cytoplasm. The protein localises to the cytoskeleton. The catalysed reaction is GTP + H2O = GDP + phosphate + H(+). Its function is as follows. Tubulin is the major constituent of microtubules, a cylinder consisting of laterally associated linear protofilaments composed of alpha- and beta-tubulin heterodimers. Microtubules grow by the addition of GTP-tubulin dimers to the microtubule end, where a stabilizing cap forms. Below the cap, tubulin dimers are in GDP-bound state, owing to GTPase activity of alpha-tubulin. The chain is Tubulin alpha-2 chain from Gallus gallus (Chicken).